Consider the following 174-residue polypeptide: NADH-quinone oxidoreductase subunit I (174 aa).

2 4Fe-4S ferredoxin-type domains span residues 44–74 and 90–119; these read LNRYPDGLEKCIGCELCAWACPADAIYVEGD and RVYQINYLRCIGCGLCIEACPTRALTMTND. [4Fe-4S] cluster-binding residues include cysteine 54, cysteine 57, cysteine 60, cysteine 64, cysteine 99, cysteine 102, cysteine 105, and cysteine 109.

Belongs to the complex I 23 kDa subunit family. NDH-1 is composed of 14 different subunits. Subunits NuoA, H, J, K, L, M, N constitute the membrane sector of the complex. [4Fe-4S] cluster is required as a cofactor.

The protein localises to the cell membrane. The catalysed reaction is a quinone + NADH + 5 H(+)(in) = a quinol + NAD(+) + 4 H(+)(out). NDH-1 shuttles electrons from NADH, via FMN and iron-sulfur (Fe-S) centers, to quinones in the respiratory chain. The immediate electron acceptor for the enzyme in this species is believed to be menaquinone. Couples the redox reaction to proton translocation (for every two electrons transferred, four hydrogen ions are translocated across the cytoplasmic membrane), and thus conserves the redox energy in a proton gradient. The sequence is that of NADH-quinone oxidoreductase subunit I from Mycobacterium sp. (strain JLS).